Consider the following 253-residue polypeptide: 1-(5-phosphoribosyl)-5-[(5-phosphoribosylamino)methylideneamino] imidazole-4-carboxamide isomerase (253 aa).

The active-site Proton acceptor is the D19. D141 serves as the catalytic Proton donor.

The protein belongs to the HisA/HisF family.

The protein localises to the cytoplasm. It catalyses the reaction 1-(5-phospho-beta-D-ribosyl)-5-[(5-phospho-beta-D-ribosylamino)methylideneamino]imidazole-4-carboxamide = 5-[(5-phospho-1-deoxy-D-ribulos-1-ylimino)methylamino]-1-(5-phospho-beta-D-ribosyl)imidazole-4-carboxamide. It participates in amino-acid biosynthesis; L-histidine biosynthesis; L-histidine from 5-phospho-alpha-D-ribose 1-diphosphate: step 4/9. This is 1-(5-phosphoribosyl)-5-[(5-phosphoribosylamino)methylideneamino] imidazole-4-carboxamide isomerase from Rhodopirellula baltica (strain DSM 10527 / NCIMB 13988 / SH1).